The sequence spans 907 residues: NADH-quinone oxidoreductase subunit G (907 aa).

Residues 1 to 83 form the 2Fe-2S ferredoxin-type domain; it reads MTIIFVDNEE…GMIVSTSDKI (83 aa). [2Fe-2S] cluster-binding residues include C34, C45, C48, and C67. The 4Fe-4S His(Cys)3-ligated-type domain maps to 83-122; the sequence is ISRNFRKGIIELLMLNHPHDCPICEEGGSCHLQDMTVMAG. Residues H99, C103, C106, C112, C151, C154, C157, C201, C228, C231, C235, and C263 each contribute to the [4Fe-4S] cluster site. A 4Fe-4S Mo/W bis-MGD-type domain is found at 221-277; the sequence is MQYAPSICQHCCVGCNISVGEKYGKISRIENRYHNAINHYFLCDLGRFSYDYSNVDE.

It belongs to the complex I 75 kDa subunit family. Composed of 13 different subunits. Subunits NuoCD, E, F, and G constitute the peripheral sector of the complex. [2Fe-2S] cluster is required as a cofactor. It depends on [4Fe-4S] cluster as a cofactor.

The enzyme catalyses a quinone + NADH + 5 H(+)(in) = a quinol + NAD(+) + 4 H(+)(out). Functionally, NDH-1 shuttles electrons from NADH, via FMN and iron-sulfur (Fe-S) centers, to quinones in the respiratory chain. Couples the redox reaction to proton translocation (for every two electrons transferred, four hydrogen ions are translocated across the cytoplasmic membrane), and thus conserves the redox energy in a proton gradient. In Buchnera aphidicola subsp. Baizongia pistaciae (strain Bp), this protein is NADH-quinone oxidoreductase subunit G (nuoG).